The chain runs to 875 residues: Phosphatidylinositol 3-kinase VPS34 (875 aa).

The region spanning 14 to 188 (LDVPLKVKIK…WLDEITISKL (175 aa)) is the C2 PI3K-type domain. Residues 293–526 (LDKQVKPDIK…SSFWSRLDKK (234 aa)) enclose the PIK helical domain. Residues 593 to 859 (CPETSKVFKS…LINDSVNALL (267 aa)) form the PI3K/PI4K catalytic domain. Positions 599-605 (VFKSSLS) are G-loop. Residues 728-736 (GVGDRHLDN) form a catalytic loop region. The segment at 747–768 (HADFGYILGQDPKPFPPLMKLP) is activation loop.

The protein belongs to the PI3/PI4-kinase family. In terms of assembly, component of the autophagy-specific VPS34 PI3-kinase complex I composed of VPS15, VPS30, VPS34, ATG14 and ATG38, and of the VPS34 PI3-kinase complex II composed of VPS15, VPS30, VPS34 and VPS38. Interacts directly with ATG38. Interacts directly with VPS34. Post-translationally, autophosphorylated. Might also be phosphorylated by VPS15.

It localises to the golgi apparatus. It is found in the trans-Golgi network membrane. The protein localises to the endosome membrane. It catalyses the reaction a 1,2-diacyl-sn-glycero-3-phospho-(1D-myo-inositol) + ATP = a 1,2-diacyl-sn-glycero-3-phospho-(1D-myo-inositol-3-phosphate) + ADP + H(+). Its activity is regulated as follows. Phosphatidylinositol 3-kinase activity is directly dependent on VPS15 protein kinase activity. Phosphatidylinositol 3-kinase required for cytoplasm to vacuole transport (Cvt) and autophagy as a part of the autophagy-specific VPS34 PI3-kinase complex I. This complex is essential to recruit the ATG8-phosphatidylinositol conjugate and the ATG12-ATG5 conjugate to the pre-autophagosomal structure. Also involved in endosome-to-Golgi retrograde transport as part of the VPS34 PI3-kinase complex II. This second complex is required for the endosome-to-Golgi retrieval of PEP1 and KEX2, and the recruitment of VPS5 and VPS7, two components of the retromer complex, to endosomal membranes (probably through the synthesis of a specific pool of phosphatidylinositol 3-phosphate recruiting the retromer to the endosomes). Its activation by VPS15 may lead to the phosphorylation of phosphatidylinositol in the sorting compartment membrane. Finally, it might also be involved in ethanol tolerance and cell wall integrity. The sequence is that of Phosphatidylinositol 3-kinase VPS34 (VPS34) from Saccharomyces cerevisiae (strain ATCC 204508 / S288c) (Baker's yeast).